Here is a 248-residue protein sequence, read N- to C-terminus: Pulmonary surfactant-associated protein A (248 aa).

A signal peptide spans 1 to 20 (MSLGSLAFTLFLTVVAGIKC). A glycan (N-linked (GlcNAc...) asparagine) is linked at N21. The Collagen-like domain occupies 28 to 100 (GSPGIPGTPG…PGERGLPGFP (73 aa)). The interval 28–100 (GSPGIPGTPG…PGERGLPGFP (73 aa)) is disordered. P30, P33, P36, P42, P54, P57, P63, P67, P70, and P76 each carry 4-hydroxyproline. Positions 42–51 (PGRDGRDGIK) are enriched in basic and acidic residues. A compositionally biased stretch (pro residues) spans 54–65 (PGPPGPMGPPGG). Residues 69-82 (LPGRDGLPGAPGAP) are compositionally biased toward low complexity. Residues 84-93 (EHGDKGEPGE) are compositionally biased toward basic and acidic residues. The region spanning 132–248 (LSVGDKVFST…LQYRLAICEF (117 aa)) is the C-type lectin domain. Intrachain disulfides connect C155–C246 and C224–C238. N-linked (GlcNAc...) asparagine glycosylation is present at N207. Positions 215, 217, 234, and 235 each coordinate Ca(2+).

It belongs to the SFTPA family. In terms of assembly, oligomeric complex of 6 set of homotrimers.

It is found in the secreted. It localises to the extracellular space. Its subcellular location is the extracellular matrix. The protein localises to the surface film. Functionally, in presence of calcium ions, it binds to surfactant phospholipids and contributes to lower the surface tension at the air-liquid interface in the alveoli of the mammalian lung and is essential for normal respiration. Enhances the expression of MYO18A/SP-R210 on alveolar macrophages. This Mus musculus (Mouse) protein is Pulmonary surfactant-associated protein A (Sftpa1).